A 476-amino-acid polypeptide reads, in one-letter code: Cysteine--tRNA ligase (476 aa).

Cys27 provides a ligand contact to Zn(2+). The 'HIGH' region signature appears at 29 to 39 (PTTYNYIHLGN). Residues Cys207, His232, and Glu236 each contribute to the Zn(2+) site. The 'KMSKS' region motif lies at 264–268 (KMSKS). Lys267 serves as a coordination point for ATP.

Belongs to the class-I aminoacyl-tRNA synthetase family. Monomer. Zn(2+) serves as cofactor.

The protein localises to the cytoplasm. It carries out the reaction tRNA(Cys) + L-cysteine + ATP = L-cysteinyl-tRNA(Cys) + AMP + diphosphate. This chain is Cysteine--tRNA ligase, found in Moorella thermoacetica (strain ATCC 39073 / JCM 9320).